Here is a 418-residue protein sequence, read N- to C-terminus: Actin-related protein 3 (418 aa).

This sequence belongs to the actin family. ARP3 subfamily. In terms of assembly, component of the Arp2/3 complex composed of actr2/arp2, actr3/arp3, arpc1b, arpc2, arpc3, arpc4 and arpc5.

It is found in the cytoplasm. The protein localises to the cytoskeleton. The protein resides in the cell projection. It localises to the nucleus. Its function is as follows. ATP-binding component of the Arp2/3 complex, a multiprotein complex that mediates actin polymerization upon stimulation by nucleation-promoting factor (NPF). The Arp2/3 complex mediates the formation of branched actin networks in the cytoplasm, providing the force for cell motility. Seems to contact the pointed end of the daughter actin filament. In addition to its role in the cytoplasmic cytoskeleton, the Arp2/3 complex also promotes actin polymerization in the nucleus, thereby regulating gene transcription and repair of damaged DNA. The Arp2/3 complex promotes homologous recombination (HR) repair in response to DNA damage by promoting nuclear actin polymerization, leading to drive motility of double-strand breaks (DSBs). This Takifugu rubripes (Japanese pufferfish) protein is Actin-related protein 3 (actr3).